Reading from the N-terminus, the 69-residue chain is Pleurain-A4 (69 aa).

An N-terminal signal peptide occupies residues 1 to 22; it reads MFTLKKTLLLLFFLGTISISLC. Positions 23-43 are excised as a propeptide; the sequence is KQERDADEDDGRKMTEEEVKR. The cysteines at positions 63 and 69 are disulfide-linked.

The protein belongs to the frog skin active peptide (FSAP) family. Pleurain subfamily. In terms of tissue distribution, expressed by the skin glands.

It is found in the secreted. Its function is as follows. Antimicrobial peptide. Has activity against Gram-positive and -negative bacteria, and fungi. Has little hemolytic activity on red blood cells. The chain is Pleurain-A4 from Nidirana pleuraden (Yunnan pond frog).